A 125-amino-acid polypeptide reads, in one-letter code: UPF0734 protein DDB_G0273871/DDB_G0273177 (125 aa).

Belongs to the UPF0734 family.

This Dictyostelium discoideum (Social amoeba) protein is UPF0734 protein DDB_G0273871/DDB_G0273177.